The sequence spans 318 residues: tRNA dimethylallyltransferase (318 aa).

Gly16–Thr23 contacts ATP. Thr18–Thr23 lines the substrate pocket. Interaction with substrate tRNA stretches follow at residues Asp41–Leu44, Gln165–Arg169, Arg246–Arg251, and Lys279–Arg286.

This sequence belongs to the IPP transferase family. Monomer. It depends on Mg(2+) as a cofactor.

The catalysed reaction is adenosine(37) in tRNA + dimethylallyl diphosphate = N(6)-dimethylallyladenosine(37) in tRNA + diphosphate. Functionally, catalyzes the transfer of a dimethylallyl group onto the adenine at position 37 in tRNAs that read codons beginning with uridine, leading to the formation of N6-(dimethylallyl)adenosine (i(6)A). This chain is tRNA dimethylallyltransferase, found in Actinobacillus succinogenes (strain ATCC 55618 / DSM 22257 / CCUG 43843 / 130Z).